A 425-amino-acid chain; its full sequence is Formyl-CoA:oxalate CoA-transferase (425 aa).

Residues 17–18, R38, 72–75, 96–98, R104, and 136–139 each bind CoA; these read QS, LDTK, NFG, and KVYE. D168 functions as the Nucleophile in the catalytic mechanism. Residue 247 to 249 coordinates substrate; it reads GGQ.

It belongs to the CoA-transferase III family. Frc subfamily. As to quaternary structure, homodimer.

The enzyme catalyses formyl-CoA + oxalate = oxalyl-CoA + formate. The protein operates within metabolic intermediate degradation; oxalate degradation; CO(2) and formate from oxalate: step 1/2. Involved in the catabolism of oxalate and in the adapatation to low pH via the induction of the oxalate-dependent acid tolerance response (ATR). Catalyzes the transfer of the CoA moiety from formyl-CoA to oxalate. This is Formyl-CoA:oxalate CoA-transferase from Bradyrhizobium diazoefficiens (strain JCM 10833 / BCRC 13528 / IAM 13628 / NBRC 14792 / USDA 110).